A 533-amino-acid polypeptide reads, in one-letter code: CTP synthase (533 aa).

An amidoligase domain region spans residues 1–269; it reads MKKNLKILVI…HEILSSKLNI (269 aa). Residue S16 participates in CTP binding. Residue S16 participates in UTP binding. Residues 17–22 and D73 contribute to the ATP site; that span reads GIGKGV. Mg(2+)-binding residues include D73 and E143. CTP-binding positions include 150–152, 190–195, and K226; these read DME and KSKPTQ. Residues 190–195 and K226 each bind UTP; that span reads KSKPTQ. Positions 304-533 constitute a Glutamine amidotransferase type-1 domain; sequence YAELDDSYAS…LFLGLIKACI (230 aa). Residue G355 participates in L-glutamine binding. C382 serves as the catalytic Nucleophile; for glutamine hydrolysis. L-glutamine contacts are provided by residues 383–386, E406, and R466; that span reads LGLQ. Catalysis depends on residues H511 and E513.

This sequence belongs to the CTP synthase family. As to quaternary structure, homotetramer.

It catalyses the reaction UTP + L-glutamine + ATP + H2O = CTP + L-glutamate + ADP + phosphate + 2 H(+). It carries out the reaction L-glutamine + H2O = L-glutamate + NH4(+). The enzyme catalyses UTP + NH4(+) + ATP = CTP + ADP + phosphate + 2 H(+). It functions in the pathway pyrimidine metabolism; CTP biosynthesis via de novo pathway; CTP from UDP: step 2/2. Its activity is regulated as follows. Allosterically activated by GTP, when glutamine is the substrate; GTP has no effect on the reaction when ammonia is the substrate. The allosteric effector GTP functions by stabilizing the protein conformation that binds the tetrahedral intermediate(s) formed during glutamine hydrolysis. Inhibited by the product CTP, via allosteric rather than competitive inhibition. Its function is as follows. Catalyzes the ATP-dependent amination of UTP to CTP with either L-glutamine or ammonia as the source of nitrogen. Regulates intracellular CTP levels through interactions with the four ribonucleotide triphosphates. This chain is CTP synthase, found in Borreliella burgdorferi (strain ATCC 35210 / DSM 4680 / CIP 102532 / B31) (Borrelia burgdorferi).